The following is a 400-amino-acid chain: Mu-type opioid receptor (400 aa).

At Met-1 to Ile-68 the chain is on the extracellular side. Asn-9, Asn-12, Asn-33, Asn-40, and Asn-48 each carry an N-linked (GlcNAc...) asparagine glycan. Residues Thr-69–Tyr-93 traverse the membrane as a helical segment. The Cytoplasmic portion of the chain corresponds to Val-94–Asn-106. Residues Ile-107–Leu-131 form a helical membrane-spanning segment. Residues Met-132–Cys-142 are Extracellular-facing. Cys-142 and Cys-219 are joined by a disulfide. A helical membrane pass occupies residues Lys-143–Val-165. Residues Asp-166–Asn-185 are Cytoplasmic-facing. Tyr-168 is subject to Phosphotyrosine. The helical transmembrane segment at Ala-186–Met-207 threads the bilayer. The Extracellular portion of the chain corresponds to Ala-208–Trp-230. Residues Glu-231 to Gly-255 form a helical membrane-spanning segment. Topologically, residues Leu-256–Met-283 are cytoplasmic. The chain crosses the membrane as a helical span at residues Val-284–Ala-306. Over Leu-307–Thr-314 the chain is Extracellular. Residues Phe-315–Tyr-338 form a helical membrane-spanning segment. Residues Asn-334–Tyr-338 carry the NPxxY; plays a role in stabilizing the activated conformation of the receptor motif. Residues Ala-339–Pro-400 lie on the Cytoplasmic side of the membrane. Residue Cys-353 is the site of S-palmitoyl cysteine attachment. Positions Asn-364–Asn-386 are disordered. At Ser-365 the chain carries Phosphoserine. Thr-372 is subject to Phosphothreonine. Ser-377 is subject to Phosphoserine. Thr-396 is modified (phosphothreonine).

It belongs to the G-protein coupled receptor 1 family. As to quaternary structure, forms homooligomers and heterooligomers with other GPCRs, such as OPRD1, OPRK1, OPRL1, NPFFR2, ADRA2A, SSTR2, CNR1 and CCR5 (probably in dimeric forms). Interacts with heterotrimeric G proteins; interaction with a heterotrimeric complex containing GNAI1, GNB1 and GNG2 stabilizes the active conformation of the receptor and increases its affinity for endomorphin-2, the synthetic opioid peptide DAMGO and for morphinan agonists. Interacts with PPL; the interaction disrupts agonist-mediated G-protein activation. Interacts (via C-terminus) with DNAJB4 (via C-terminus). Interacts with calmodulin; the interaction inhibits the constitutive activity of OPRM1; it abolishes basal and attenuates agonist-stimulated G-protein coupling. Interacts with FLNA, PLD2, RANBP9 and WLS and GPM6A. Interacts with RTP4. Interacts with SYP and GNAS. Interacts with RGS9, RGS17, RGS20, RGS4, PPP1R9B and HINT1. Phosphorylated. Differentially phosphorylated in basal and agonist-induced conditions. Agonist-mediated phosphorylation modulates receptor internalization. Phosphorylated by GRK2 in a agonist-dependent manner. Phosphorylation at Tyr-168 requires receptor activation, is dependent on non-receptor protein tyrosine kinase Src and results in a decrease in agonist efficacy by reducing G-protein coupling efficiency. Phosphorylated on tyrosine residues; the phosphorylation is involved in agonist-induced G-protein-independent receptor down-regulation. Phosphorylation at Ser-377 is involved in G-protein-dependent but not beta-arrestin-dependent activation of the ERK pathway. Post-translationally, ubiquitinated. A basal ubiquitination seems not to be related to degradation. Ubiquitination is increased upon formation of OPRM1:OPRD1 oligomers leading to proteasomal degradation; the ubiquitination is diminished by RTP4.

It is found in the cell membrane. The protein localises to the cell projection. The protein resides in the axon. It localises to the perikaryon. Its subcellular location is the dendrite. It is found in the endosome. In terms of biological role, receptor for endogenous opioids such as beta-endorphin and endomorphin. Receptor for natural and synthetic opioids including morphine, heroin, DAMGO, fentanyl, etorphine, buprenorphin and methadone. Also activated by enkephalin peptides, such as Met-enkephalin or Met-enkephalin-Arg-Phe, with higher affinity for Met-enkephalin-Arg-Phe. Agonist binding to the receptor induces coupling to an inactive GDP-bound heterotrimeric G-protein complex and subsequent exchange of GDP for GTP in the G-protein alpha subunit leading to dissociation of the G-protein complex with the free GTP-bound G-protein alpha and the G-protein beta-gamma dimer activating downstream cellular effectors. The agonist- and cell type-specific activity is predominantly coupled to pertussis toxin-sensitive G(i) and G(o) G alpha proteins, GNAI1, GNAI2, GNAI3 and GNAO1, and to a lesser extent to pertussis toxin-insensitive G alpha proteins GNAZ and GNA15. They mediate an array of downstream cellular responses, including inhibition of adenylate cyclase activity and both N-type and L-type calcium channels, activation of inward rectifying potassium channels, mitogen-activated protein kinase (MAPK), phospholipase C (PLC), phosphoinositide/protein kinase (PKC), phosphoinositide 3-kinase (PI3K) and regulation of NF-kappa-B. Also couples to adenylate cyclase stimulatory G alpha proteins. The selective temporal coupling to G-proteins and subsequent signaling can be regulated by RGSZ proteins, such as RGS9, RGS17 and RGS4. Phosphorylation by members of the GPRK subfamily of Ser/Thr protein kinases and association with beta-arrestins is involved in short-term receptor desensitization. Beta-arrestins associate with the GPRK-phosphorylated receptor and uncouple it from the G-protein thus terminating signal transduction. The phosphorylated receptor is internalized through endocytosis via clathrin-coated pits which involves beta-arrestins. The activation of the ERK pathway occurs either in a G-protein-dependent or a beta-arrestin-dependent manner and is regulated by agonist-specific receptor phosphorylation. Acts as a class A G-protein coupled receptor (GPCR) which dissociates from beta-arrestin at or near the plasma membrane and undergoes rapid recycling. Receptor down-regulation pathways are varying with the agonist and occur dependent or independent of G-protein coupling. Endogenous ligands induce rapid desensitization, endocytosis and recycling. Heterooligomerization with other GPCRs can modulate agonist binding, signaling and trafficking properties. Involved in neurogenesis. This Macaca mulatta (Rhesus macaque) protein is Mu-type opioid receptor (OPRM1).